Here is a 459-residue protein sequence, read N- to C-terminus: Inositol-trisphosphate 3-kinase A (459 aa).

Positions Met-1 to Ala-26 are disordered. Omega-N-methylarginine is present on residues Arg-35, Arg-55, and Arg-62. The tract at residues Ala-49–His-164 is disordered. Low complexity predominate over residues Arg-116–Leu-132. A phosphoserine mark is found at Ser-135 and Ser-195. Residues Ser-195, Lys-207, Gln-247 to Leu-249, and Asp-260 each bind ATP. Lys-262 and Arg-283 together coordinate substrate. The tract at residues Asp-285–Val-293 is calmodulin-binding. Residue Lys-310–Arg-317 coordinates substrate. Residues Lys-334 and Asp-414 each coordinate ATP. Lys-417 lines the substrate pocket.

The protein belongs to the inositol phosphokinase (IPK) family.

The protein localises to the cytoplasm. The protein resides in the cytoskeleton. The catalysed reaction is 1D-myo-inositol 1,4,5-trisphosphate + ATP = 1D-myo-inositol 1,3,4,5-tetrakisphosphate + ADP + H(+). Its activity is regulated as follows. Activated by calcium/calmodulin. Catalyzes the phosphorylation of 1D-myo-inositol 1,4,5-trisphosphate (InsP3) into 1D-myo-inositol 1,3,4,5-tetrakisphosphate and participates to the regulation of calcium homeostasis. In Rattus norvegicus (Rat), this protein is Inositol-trisphosphate 3-kinase A.